We begin with the raw amino-acid sequence, 910 residues long: Alanine--tRNA ligase (910 aa).

Residues 488–505 (RHEEKKEDSKSEKGENTA) show a composition bias toward basic and acidic residues. The tract at residues 488 to 507 (RHEEKKEDSKSEKGENTAEK) is disordered. Histidine 614, histidine 618, cysteine 718, and histidine 722 together coordinate Zn(2+).

This sequence belongs to the class-II aminoacyl-tRNA synthetase family. Zn(2+) is required as a cofactor.

The protein localises to the cytoplasm. The catalysed reaction is tRNA(Ala) + L-alanine + ATP = L-alanyl-tRNA(Ala) + AMP + diphosphate. Functionally, catalyzes the attachment of alanine to tRNA(Ala) in a two-step reaction: alanine is first activated by ATP to form Ala-AMP and then transferred to the acceptor end of tRNA(Ala). Also edits incorrectly charged Ser-tRNA(Ala) and Gly-tRNA(Ala) via its editing domain. In Methanococcus aeolicus (strain ATCC BAA-1280 / DSM 17508 / OCM 812 / Nankai-3), this protein is Alanine--tRNA ligase.